A 467-amino-acid polypeptide reads, in one-letter code: Actinorhodin polyketide putative beta-ketoacyl synthase 1 (467 aa).

Residues 1–35 (MPLDAAPVDPASRGPVSAFEPPSSHGADDDDDHRT) are disordered. One can recognise a Ketosynthase family 3 (KS3) domain in the interval 45-459 (KRRVVITGVG…GFQSAMVLRD (415 aa)). Active-site for beta-ketoacyl synthase activity residues include C212, H352, and H389.

This sequence belongs to the thiolase-like superfamily. Beta-ketoacyl-ACP synthases family.

It participates in antibiotic biosynthesis; actinorhodin biosynthesis. The polypeptide is Actinorhodin polyketide putative beta-ketoacyl synthase 1 (Streptomyces coelicolor (strain ATCC BAA-471 / A3(2) / M145)).